The sequence spans 277 residues: Large ribosomal subunit protein uL2 (277 aa).

The interval 211-277 (SRWKGVRPTV…KLIVRGRKKK (67 aa)) is disordered.

The protein belongs to the universal ribosomal protein uL2 family. Part of the 50S ribosomal subunit. Forms a bridge to the 30S subunit in the 70S ribosome.

In terms of biological role, one of the primary rRNA binding proteins. Required for association of the 30S and 50S subunits to form the 70S ribosome, for tRNA binding and peptide bond formation. It has been suggested to have peptidyltransferase activity; this is somewhat controversial. Makes several contacts with the 16S rRNA in the 70S ribosome. This chain is Large ribosomal subunit protein uL2, found in Staphylococcus epidermidis (strain ATCC 35984 / DSM 28319 / BCRC 17069 / CCUG 31568 / BM 3577 / RP62A).